The chain runs to 1193 residues: Probable cation-transporting ATPase 13A4 (1193 aa).

The Cytoplasmic segment spans residues methionine 1–arginine 32. An intramembrane segment occupies lysine 33–tryptophan 53. Residues arginine 54–leucine 198 lie on the Cytoplasmic side of the membrane. A helical membrane pass occupies residues leucine 199 to phenylalanine 219. Residues serine 220–lysine 224 lie on the Lumenal side of the membrane. A helical transmembrane segment spans residues glutamate 225–leucine 245. The Cytoplasmic portion of the chain corresponds to arginine 246 to arginine 401. A helical transmembrane segment spans residues phenylalanine 402–valine 422. The Lumenal segment spans residues leucine 423–aspartate 437. A helical transmembrane segment spans residues valine 438–alanine 458. Residues glutamine 459 to serine 901 are Cytoplasmic-facing. Catalysis depends on aspartate 487, which acts as the 4-aspartylphosphate intermediate. Mg(2+) contacts are provided by aspartate 849 and aspartate 853. A helical membrane pass occupies residues phenylalanine 902 to leucine 922. Topologically, residues tyrosine 923 to glutamine 933 are lumenal. Residues phenylalanine 934–alanine 954 traverse the membrane as a helical segment. Topologically, residues asparagine 955–leucine 973 are cytoplasmic. A helical transmembrane segment spans residues leucine 974–valine 994. Topologically, residues glutamine 995–serine 1036 are lumenal. A helical transmembrane segment spans residues phenylalanine 1037–phenylalanine 1057. At serine 1058–tyrosine 1071 the chain is on the cytoplasmic side. Residues isoleucine 1072 to isoleucine 1092 form a helical membrane-spanning segment. The Lumenal portion of the chain corresponds to proline 1093–proline 1105. Residues valine 1106 to valine 1126 form a helical membrane-spanning segment. Over glutamate 1127–leucine 1193 the chain is Cytoplasmic.

Belongs to the cation transport ATPase (P-type) (TC 3.A.3) family. Type V subfamily. As to expression, expressed in brain and stomach.

The protein resides in the early endosome membrane. The protein localises to the late endosome membrane. It localises to the recycling endosome membrane. It catalyses the reaction ATP + H2O = ADP + phosphate + H(+). The protein is Probable cation-transporting ATPase 13A4 (Atp13a4) of Mus musculus (Mouse).